The sequence spans 433 residues: WD repeat domain phosphoinositide-interacting protein 1 (433 aa).

A Nuclear receptor interaction motif is present at residues 127–132; it reads LLKTLL. WD repeat units lie at residues 136 to 177 and 180 to 220; these read RNPH…CECT and AHDS…KLYE. Positions 221–224 match the L/FRRG motif motif; sequence FRRG. WD repeat units follow at residues 226–265 and 296–346; these read KRYV…ERSE and DRAF…GGEC.

Belongs to the WD repeat PROPPIN family.

It localises to the golgi apparatus. The protein localises to the trans-Golgi network. The protein resides in the endosome. It is found in the cytoplasmic vesicle. Its subcellular location is the clathrin-coated vesicle. It localises to the preautophagosomal structure membrane. The protein localises to the cytoplasm. The protein resides in the cytoskeleton. Component of the autophagy machinery that controls the major intracellular degradation process by which cytoplasmic materials are packaged into autophagosomes and delivered to lysosomes for degradation. Plays an important role in starvation- and calcium-mediated autophagy, as well as in mitophagy. Functions downstream of the ulk1 and PI3-kinases that produce phosphatidylinositol 3-phosphate (PtdIns3P) on membranes of the endoplasmic reticulum once activated. Binds phosphatidylinositol 3-phosphate (PtdIns3P), and maybe other phosphoinositides including PtdIns3,5P2 and PtdIns5P, and is recruited to phagophore assembly sites at the endoplasmic reticulum membranes. There, it assists wipi2 in the recruitment of atg12-atg5-atg16l1, a complex that directly controls the elongation of the nascent autophagosomal membrane. Together with wdr45/wipi4, promotes atg2 (atg2a or atg2b)-mediated lipid transfer by enhancing atg2-association with phosphatidylinositol 3-monophosphate (PI3P)-containing membranes. The sequence is that of WD repeat domain phosphoinositide-interacting protein 1 (wipi1) from Xenopus laevis (African clawed frog).